Reading from the N-terminus, the 481-residue chain is Leukocyte immunoglobulin-like receptor subfamily A member 6 (481 aa).

The first 23 residues, 1–23 (MTPALTALLCLGLSLGPRTRVQA), serve as a signal peptide directing secretion. The Extracellular segment spans residues 24-447 (GPFPKPTLWA…SHAKDYTVEN (424 aa)). The cysteines at positions 49 and 98 are disulfide-linked. Residues 59-70 (QLDKEGSPEPLD) show a composition bias toward basic and acidic residues. The tract at residues 59 to 78 (QLDKEGSPEPLDRNNPLEPK) is disordered. A glycan (N-linked (GlcNAc...) asparagine) is linked at N139. 2 disulfides stabilise this stretch: C144-C196 and C245-C296. 2 consecutive Ig-like C2-type domains span residues 225–314 (PSLL…DPLN) and 323–408 (DTVS…HLLS). 2 N-linked (GlcNAc...) asparagine glycosylation sites follow: N301 and N340. C345 and C396 are oxidised to a cystine. The segment at 419–439 (SGHSGGSSLPPTGPPSTPASH) is disordered. The chain crosses the membrane as a helical span at residues 448 to 468 (LIRMGMAGLVLVFLGILLFEA). Topologically, residues 469–481 (QHSQRNPQDAAGR) are cytoplasmic.

It localises to the membrane. In terms of biological role, may act as receptor for class I MHC antigens. This chain is Leukocyte immunoglobulin-like receptor subfamily A member 6 (LILRA6), found in Homo sapiens (Human).